Reading from the N-terminus, the 132-residue chain is Phycocyanin PC645 alpha-1 subunit (132 aa).

(2R,3E)-phycocyanobilin-binding residues include D54 and R68. Mesobiliverdin-binding residues include C70, Q76, Y77, and K92. The 15,16-dihydrobiliverdin site is built by P123 and I125.

Belongs to the phycoerythrin family. In terms of assembly, heterotetramer of 2 different alpha chains and 2 identical beta chains which form 2 alpha-beta heterodimers within the heterotetramer. Contains two phycocyanobilin chromophores, one mesobiliverdin chromophore and one 15,16-dihydrobiliverdin chromophore with binding mediated by both the alpha and beta subunits.

Its subcellular location is the plastid. It localises to the chloroplast thylakoid membrane. Functionally, light-harvesting photosynthetic tetrapyrrole chromophore-protein from the phycobiliprotein complex. This is Phycocyanin PC645 alpha-1 subunit from Chroomonas sp. (strain CCMP270).